A 96-amino-acid chain; its full sequence is Putative membrane protein insertion efficiency factor (96 aa).

Residues 71-84 (THGTAAAPPASAAP) are compositionally biased toward low complexity. The tract at residues 71–96 (THGTAAAPPASAAPGRPPVTVRLPRP) is disordered.

The protein belongs to the UPF0161 family.

It is found in the cell inner membrane. Could be involved in insertion of integral membrane proteins into the membrane. The polypeptide is Putative membrane protein insertion efficiency factor (Cupriavidus metallidurans (strain ATCC 43123 / DSM 2839 / NBRC 102507 / CH34) (Ralstonia metallidurans)).